The chain runs to 318 residues: MANTLEQLKLYTTIVADTGDIEAIKRYQPEDATTNPSLILKAAQIPEYESLIDNAIDWAKSQSDDLAQQLDDASDKLAVNIGVEILKLVPGRISTEVDARLSFDKEQSIAKAHKLVRLYKEAGVDKSRILIKLASTWEGICAAKELEKEGINCNLTLLFSFAQARACAEAGAYLISPFVGRILDWYKKDTGKDYDAVNDPGVVSVTEIYNYYKQHGFNTVVMGASFRNIGEIIELAGCDRLTIGPSLLEELANSQVDITPKLVAATSTVAAEAPLTEAQFRWDFNQDPMAVDKLAEGIRNFAIDQGKLEVMLTAKLAN.

Lys132 (schiff-base intermediate with substrate) is an active-site residue.

This sequence belongs to the transaldolase family. Type 1 subfamily. Homodimer.

Its subcellular location is the cytoplasm. The catalysed reaction is D-sedoheptulose 7-phosphate + D-glyceraldehyde 3-phosphate = D-erythrose 4-phosphate + beta-D-fructose 6-phosphate. Its pathway is carbohydrate degradation; pentose phosphate pathway; D-glyceraldehyde 3-phosphate and beta-D-fructose 6-phosphate from D-ribose 5-phosphate and D-xylulose 5-phosphate (non-oxidative stage): step 2/3. Functionally, transaldolase is important for the balance of metabolites in the pentose-phosphate pathway. In Shewanella baltica (strain OS185), this protein is Transaldolase.